An 861-amino-acid polypeptide reads, in one-letter code: Piwi-like protein 1 (861 aa).

The segment covering 1-13 has biased composition (basic residues); that stretch reads MTGRARARARGRA. The tract at residues 1–64 is disordered; the sequence is MTGRARARAR…TAGGTAKSQG (64 aa). At Arg-14 the chain carries Omega-N-methylarginine; by PRMT5; alternate. Residue Arg-14 is modified to Symmetric dimethylarginine; by PRMT5; alternate. The span at 17–27 shows a compositional bias: polar residues; sequence ETAQLVGSTAS. Arg-49 carries the post-translational modification Omega-N-methylarginine; by PRMT5. Arg-53 is modified (omega-N-methylarginine; alternate). Arg-53 is modified (symmetric dimethylarginine; alternate). The short motif at 217–224 is the D-box element; that stretch reads RRLLKIMN. The region spanning 278–391 is the PAZ domain; sequence TVLDFMFNFY…LIPELCYLTG (114 aa). The tract at residues 316 to 318 is required for binding 2'-O-methylated 3'-end of piRNAs; sequence TYR. At Arg-370 the chain carries Omega-N-methylarginine; by PRMT5. Residues 479–615 are MID region; sequence SKETRGAPLI…LQMNCKMGGE (137 aa). The region spanning 555–847 is the Piwi domain; it reads IVVCLLSSNR…LAFLVGQSIH (293 aa). Residues Asp-632, Glu-670, Asp-702, and His-836 contribute to the active site.

The protein belongs to the argonaute family. Piwi subfamily. In terms of assembly, interacts (via Piwi domain) with DICER1, suggesting that it forms ribonucleoprotein RISC complexes; this interaction is regulated by HSP90AB1 activity. Interacts with MAEL, KIF17, PABPC1, PRMT5 and WDR77. Interacts (when methylated on arginine residues) with TDRD1, TDRKH/TDRD2, RNF17/TDRD4, TDRD6, TDRD7 and TDRD9. Interacts with CLOCK. Interacts with MOV10L1. Interacts with ANAPC10; interaction oly takes place following piRNA-binding. Interacts with RNF8; leading to sequester RNF8 in the cytoplasm. Interacts with TEX19. The cofactor is Mg(2+). Arginine methylation by PRMT5 is required for the interaction with Tudor domain-containing protein (TDRD1, TDRKH/TDRD2, RNF17/TDRD4, TDRD6, TDRD7 and TDRD9) and subsequent localization to the meiotic nuage, also named P granule. Post-translationally, ubiquitinated by the anaphase promoting complex/cyclosome (APC/C) in late spermatids, leading to its degradation. Ubiquitination only takes place following piRNA-binding in adult testis. Ubiquitination and degradation in late spermatogenesis by APC/C is probably required to release RNF8 from the cytoplasm and promote histone to protamine exchange by RNF8. In terms of tissue distribution, expressed in spermatocytes and spermatids. Also detected in prostate cancer (at protein level). Detected in most fetal and adult tissues. Expressed in testes, specifically in germline cells; detected in spermatocytes and spermatids during spermatogenesis. Increased expression in testicular tumors originating from embryonic germ cells with retention of germ cells phenotype. No expression in testicular tumors of somatic origin, such as Sertoli cell and Leydig cell tumors. Overexpressed in gastric cancer cells. Isoform 3: Ubiquitously expressed, and specifically in CD34(+) hematopoietic progenitor cells but not in more differentiated cells.

The protein localises to the cytoplasm. Its function is as follows. Endoribonuclease that plays a central role in postnatal germ cells by repressing transposable elements and preventing their mobilization, which is essential for the germline integrity. Acts via the piRNA metabolic process, which mediates the repression of transposable elements during meiosis by forming complexes composed of piRNAs and Piwi proteins and governs the methylation and subsequent repression of transposons. Directly binds methylated piRNAs, a class of 24 to 30 nucleotide RNAs that are generated by a Dicer-independent mechanism and are primarily derived from transposons and other repeated sequence elements. Strongly prefers a uridine in the first position of their guide (g1U preference, also named 1U-bias). Not involved in the piRNA amplification loop, also named ping-pong amplification cycle. Acts as an endoribonuclease that cleaves transposon messenger RNAs. Besides their function in transposable elements repression, piRNAs are probably involved in other processes during meiosis such as translation regulation. Probable component of some RISC complex, which mediates RNA cleavage and translational silencing. Also plays a role in the formation of chromatoid bodies and is required for some miRNAs stability. Required to sequester RNF8 in the cytoplasm until late spermatogenesis; RNF8 being released upon ubiquitination and degradation of PIWIL1. Functionally, may be a negative developmental regulator. The polypeptide is Piwi-like protein 1 (PIWIL1) (Homo sapiens (Human)).